The primary structure comprises 282 residues: Elongation factor Ts (282 aa).

Positions 80 to 83 (TDFV) are involved in Mg(2+) ion dislocation from EF-Tu.

The protein belongs to the EF-Ts family.

Its subcellular location is the cytoplasm. Its function is as follows. Associates with the EF-Tu.GDP complex and induces the exchange of GDP to GTP. It remains bound to the aminoacyl-tRNA.EF-Tu.GTP complex up to the GTP hydrolysis stage on the ribosome. The chain is Elongation factor Ts (tsf) from Chlamydia pneumoniae (Chlamydophila pneumoniae).